The primary structure comprises 62 residues: Sperm protamine P1 (62 aa).

Positions 1–62 (MARYRHSRSR…RYSRRRRRRY (62 aa)) are disordered.

This sequence belongs to the protamine P1 family. Testis.

It is found in the nucleus. It localises to the chromosome. Protamines substitute for histones in the chromatin of sperm during the haploid phase of spermatogenesis. They compact sperm DNA into a highly condensed, stable and inactive complex. The sequence is that of Sperm protamine P1 (PRM1) from Wallabia bicolor (Swamp wallaby).